The primary structure comprises 235 residues: Ribonuclease PH (235 aa).

Residues arginine 86 and 124 to 126 (GTR) contribute to the phosphate site.

Belongs to the RNase PH family. In terms of assembly, homohexameric ring arranged as a trimer of dimers.

The catalysed reaction is tRNA(n+1) + phosphate = tRNA(n) + a ribonucleoside 5'-diphosphate. Its function is as follows. Phosphorolytic 3'-5' exoribonuclease that plays an important role in tRNA 3'-end maturation. Removes nucleotide residues following the 3'-CCA terminus of tRNAs; can also add nucleotides to the ends of RNA molecules by using nucleoside diphosphates as substrates, but this may not be physiologically important. Probably plays a role in initiation of 16S rRNA degradation (leading to ribosome degradation) during starvation. In Francisella tularensis subsp. tularensis (strain FSC 198), this protein is Ribonuclease PH.